The following is a 367-amino-acid chain: 2-aminoethylphosphonate--pyruvate transaminase (367 aa).

K194 carries the N6-(pyridoxal phosphate)lysine modification.

This sequence belongs to the class-V pyridoxal-phosphate-dependent aminotransferase family. PhnW subfamily. Homodimer. Pyridoxal 5'-phosphate is required as a cofactor.

The catalysed reaction is (2-aminoethyl)phosphonate + pyruvate = phosphonoacetaldehyde + L-alanine. Functionally, involved in phosphonate degradation. The chain is 2-aminoethylphosphonate--pyruvate transaminase from Salmonella paratyphi A (strain ATCC 9150 / SARB42).